A 259-amino-acid chain; its full sequence is Ribosomal RNA small subunit methyltransferase J (259 aa).

S-adenosyl-L-methionine-binding positions include 101 to 102 (RD), 117 to 118 (ER), 153 to 154 (SS), and D176.

It belongs to the methyltransferase superfamily. RsmJ family.

It localises to the cytoplasm. It carries out the reaction guanosine(1516) in 16S rRNA + S-adenosyl-L-methionine = N(2)-methylguanosine(1516) in 16S rRNA + S-adenosyl-L-homocysteine + H(+). Its function is as follows. Specifically methylates the guanosine in position 1516 of 16S rRNA. The protein is Ribosomal RNA small subunit methyltransferase J of Vibrio campbellii (strain ATCC BAA-1116).